Reading from the N-terminus, the 49-residue chain is Feruloyl esterase A (49 aa).

This sequence belongs to the AB hydrolase superfamily. FaeA family.

The protein resides in the secreted. The catalysed reaction is feruloyl-polysaccharide + H2O = ferulate + polysaccharide.. Functionally, involved in degradation of plant cell walls. Hydrolyzes the feruloyl-arabinose ester bond in arabinoxylans as well as the feruloyl-galactose and feruloyl-arabinose ester bonds in pectin. Active against methyl esters of sinapate (MSA), but not caffeate (MCA). This chain is Feruloyl esterase A, found in Talaromyces stipitatus (strain ATCC 10500 / CBS 375.48 / QM 6759 / NRRL 1006) (Penicillium stipitatum).